Consider the following 228-residue polypeptide: Small ribosomal subunit protein uS3 (228 aa).

The 69-residue stretch at 39–107 (VREFIRERLK…PVHINIEEIR (69 aa)) folds into the KH type-2 domain.

This sequence belongs to the universal ribosomal protein uS3 family. Part of the 30S ribosomal subunit. Forms a tight complex with proteins S10 and S14.

In terms of biological role, binds the lower part of the 30S subunit head. Binds mRNA in the 70S ribosome, positioning it for translation. In Halorhodospira halophila (strain DSM 244 / SL1) (Ectothiorhodospira halophila (strain DSM 244 / SL1)), this protein is Small ribosomal subunit protein uS3.